We begin with the raw amino-acid sequence, 707 residues long: Elongation factor G 2 (707 aa).

Positions 8–290 constitute a tr-type G domain; that stretch reads ERYRNIGISA…AVIDYLPSPA (283 aa). GTP-binding positions include 17–24, 88–92, and 142–145; these read AHIDAGKT, DTPGH, and NKMD.

The protein belongs to the TRAFAC class translation factor GTPase superfamily. Classic translation factor GTPase family. EF-G/EF-2 subfamily.

It is found in the cytoplasm. Its function is as follows. Catalyzes the GTP-dependent ribosomal translocation step during translation elongation. During this step, the ribosome changes from the pre-translocational (PRE) to the post-translocational (POST) state as the newly formed A-site-bound peptidyl-tRNA and P-site-bound deacylated tRNA move to the P and E sites, respectively. Catalyzes the coordinated movement of the two tRNA molecules, the mRNA and conformational changes in the ribosome. In Bordetella bronchiseptica (strain ATCC BAA-588 / NCTC 13252 / RB50) (Alcaligenes bronchisepticus), this protein is Elongation factor G 2.